A 205-amino-acid polypeptide reads, in one-letter code: Putative epidermin response regulator (205 aa).

Positions 103-200 form a DNA-binding region, ompR/PhoB-type; it reads KYIKYVNDDF…ERKLGYKILI (98 aa).

To the C-terminus of E.coli phosphate regulon transcriptional regulatory protein PhoB.

This Staphylococcus epidermidis protein is Putative epidermin response regulator (epiQ).